We begin with the raw amino-acid sequence, 680 residues long: DNA-directed RNA polymerase subunit beta' (680 aa).

The Zn(2+) site is built by Cys-69, Cys-71, Cys-87, and Cys-90. Residues Asp-489, Asp-491, and Asp-493 each coordinate Mg(2+).

The protein belongs to the RNA polymerase beta' chain family. RpoC1 subfamily. As to quaternary structure, in plastids the minimal PEP RNA polymerase catalytic core is composed of four subunits: alpha, beta, beta', and beta''. When a (nuclear-encoded) sigma factor is associated with the core the holoenzyme is formed, which can initiate transcription. Mg(2+) is required as a cofactor. Zn(2+) serves as cofactor.

The protein localises to the plastid. It localises to the chloroplast. It catalyses the reaction RNA(n) + a ribonucleoside 5'-triphosphate = RNA(n+1) + diphosphate. In terms of biological role, DNA-dependent RNA polymerase catalyzes the transcription of DNA into RNA using the four ribonucleoside triphosphates as substrates. The sequence is that of DNA-directed RNA polymerase subunit beta' from Nandina domestica (Heavenly bamboo).